Reading from the N-terminus, the 364-residue chain is DNA replication and repair protein RecF (364 aa).

30–37 (GNNAQGKT) is a binding site for ATP.

Belongs to the RecF family.

It localises to the cytoplasm. The RecF protein is involved in DNA metabolism; it is required for DNA replication and normal SOS inducibility. RecF binds preferentially to single-stranded, linear DNA. It also seems to bind ATP. The polypeptide is DNA replication and repair protein RecF (Clostridium botulinum (strain Okra / Type B1)).